The primary structure comprises 338 residues: Cilia- and flagella-associated protein 36 (338 aa).

Positions I142–T179 form a coiled coil. Disordered regions lie at residues E175–Y220 and K281–L314. Residues K187–P202 show a composition bias toward polar residues. A coiled-coil region spans residues N255–L330.

The protein belongs to the CFAP36 family.

The protein localises to the nucleus. It is found in the cytoplasm. The protein resides in the cell projection. Its subcellular location is the cilium. It localises to the flagellum. This chain is Cilia- and flagella-associated protein 36, found in Xenopus laevis (African clawed frog).